Here is a 443-residue protein sequence, read N- to C-terminus: Probable glycine dehydrogenase (decarboxylating) subunit 1 (443 aa).

It belongs to the GcvP family. N-terminal subunit subfamily. In terms of assembly, the glycine cleavage system is composed of four proteins: P, T, L and H. In this organism, the P 'protein' is a heterodimer of two subunits.

The catalysed reaction is N(6)-[(R)-lipoyl]-L-lysyl-[glycine-cleavage complex H protein] + glycine + H(+) = N(6)-[(R)-S(8)-aminomethyldihydrolipoyl]-L-lysyl-[glycine-cleavage complex H protein] + CO2. Its function is as follows. The glycine cleavage system catalyzes the degradation of glycine. The P protein binds the alpha-amino group of glycine through its pyridoxal phosphate cofactor; CO(2) is released and the remaining methylamine moiety is then transferred to the lipoamide cofactor of the H protein. The polypeptide is Probable glycine dehydrogenase (decarboxylating) subunit 1 (Desulfovibrio desulfuricans (strain ATCC 27774 / DSM 6949 / MB)).